Here is a 613-residue protein sequence, read N- to C-terminus: Arginine--tRNA ligase (613 aa).

Residues 123–133 (PNVAKPMHVGH) carry the 'HIGH' region motif.

The protein belongs to the class-I aminoacyl-tRNA synthetase family. As to quaternary structure, monomer.

The protein localises to the cytoplasm. It carries out the reaction tRNA(Arg) + L-arginine + ATP = L-arginyl-tRNA(Arg) + AMP + diphosphate. The chain is Arginine--tRNA ligase from Caulobacter sp. (strain K31).